Here is a 1013-residue protein sequence, read N- to C-terminus: Zinc finger and BTB domain-containing protein 4 (1013 aa).

The 123-residue stretch at 30–152 folds into the BTB domain; it reads CDVTLIAGDT…IYSARLALPG (123 aa). A Glycyl lysine isopeptide (Lys-Gly) (interchain with G-Cter in SUMO2) cross-link involves residue K40. The segment covering 67-110 has biased composition (low complexity); it reads LPPATGGAAPNPATTTAASSSSSSSSSSSSSSSSASSSSSSSSS. 2 disordered regions span residues 67–124 and 183–221; these read LPPA…SPPR and DAWVPPTPAPMATSQPEEDSFGPGPRPAGEWEGDRAEAQ. Pro residues predominate over residues 111–121; the sequence is SPPPASPPASS. An interaction with CBFA2T3 region spans residues 186-348; it reads VPPTPAPMAT…CRYCEKVFAL (163 aa). Residues 234 to 256 form a C2H2-type 1; atypical zinc finger; it reads LPCPQCGKSFIHPKRLQTHEAQC. The tract at residues 257 to 281 is disordered; the sequence is RRGASTRGSTGLGAGGAGPGGPAGV. Gly residues predominate over residues 266–279; the sequence is TGLGAGGAGPGGPA. 3 C2H2-type zinc fingers span residues 309-331, 337-359, and 365-388; these read YVCAACERSYVTLSSLKRHSNVH, YPCRYCEKVFALAEYRTKHEVWH, and YQCIFCWETFVTYYNLKTHQRAFH. Residue S391 is modified to Phosphoserine. Disordered regions lie at residues 428–765, 783–852, 883–904, and 972–1013; these read KTYS…STRF, HGQR…DPII, GREPGGGRGKSGSEGPVGAGEG, and VNPQ…GDVG. The span at 453-470 shows a compositional bias: pro residues; the sequence is ASPPPGPPPAPEPGPPPS. 2 stretches are compositionally biased toward low complexity: residues 496 to 506 and 531 to 554; these read TASTGGSQAAS and ATPTSPATAVSPATAAGPAMATTT. A Glycyl lysine isopeptide (Lys-Gly) (interchain with G-Cter in SUMO2) cross-link involves residue K573. Gly residues predominate over residues 576-590; it reads GGIGGGGGPPTGAGR. Basic and acidic residues predominate over residues 608-625; it reads IGEEAIVKRRISETDLRP. K615 participates in a covalent cross-link: Glycyl lysine isopeptide (Lys-Gly) (interchain with G-Cter in SUMO2). Residues 627–663 adopt a coiled-coil conformation; sequence ELSGEEMEESEEDEEEEDEEEEEEDEEESKAGGEDQL. Acidic residues predominate over residues 629–654; that stretch reads SGEEMEESEEDEEEEDEEEEEEDEEE. A compositionally biased stretch (gly residues) spans 678 to 689; sequence AAGGASVGGSGL. 2 consecutive C2H2-type zinc fingers follow at residues 726 to 748 and 765 to 787; these read HRCGDCAQTFTTLRKLRKHQEAH and FTCPHCAKVCKTAAALSRHGQRH. A phosphothreonine; by HIPK2 mark is found at T795 and T797. Residues 836-846 show a composition bias toward low complexity; sequence TAAEEASETAS. Residues 883–902 show a composition bias toward gly residues; that stretch reads GREPGGGRGKSGSEGPVGAG. Residues 976 to 995 show a composition bias toward pro residues; the sequence is AAPPAPPTPPPPTLPPPIPP. T983 carries the post-translational modification Phosphothreonine; by HIPK2. The segment covering 997–1013 has biased composition (basic and acidic residues); that stretch reads GEGERAGVERTQKGDVG.

Interacts with HIPK2. Interacts with CBFA2T3. Interacts with ZBTB38. Post-translationally, phosphorylated by HIPK2. This phosphorylation reduces stability and triggers ZBTB4 protein degradation in response to DNA damage.

Its subcellular location is the nucleus. The protein resides in the chromosome. Its function is as follows. Transcriptional repressor with bimodal DNA-binding specificity. Represses transcription in a methyl-CpG-dependent manner. Binds with a higher affinity to methylated CpG dinucleotides in the consensus sequence 5'-CGCG-3' but can also bind to the non-methylated consensus sequence 5'-CTGCNA-3' also known as the consensus kaiso binding site (KBS). Can also bind specifically to a single methyl-CpG pair and can bind hemimethylated DNA but with a lower affinity compared to methylated DNA. Plays a role in postnatal myogenesis, may be involved in the regulation of satellite cells self-renewal. This Homo sapiens (Human) protein is Zinc finger and BTB domain-containing protein 4 (ZBTB4).